We begin with the raw amino-acid sequence, 152 residues long: Deoxyuridine 5'-triphosphate nucleotidohydrolase (152 aa).

Residues 72–74 (RSG), asparagine 85, and 89–91 (TID) each bind substrate.

It belongs to the dUTPase family. Requires Mg(2+) as cofactor.

The catalysed reaction is dUTP + H2O = dUMP + diphosphate + H(+). The protein operates within pyrimidine metabolism; dUMP biosynthesis; dUMP from dCTP (dUTP route): step 2/2. In terms of biological role, this enzyme is involved in nucleotide metabolism: it produces dUMP, the immediate precursor of thymidine nucleotides and it decreases the intracellular concentration of dUTP so that uracil cannot be incorporated into DNA. This Rhodopseudomonas palustris (strain BisB18) protein is Deoxyuridine 5'-triphosphate nucleotidohydrolase.